The chain runs to 351 residues: Cell shape-determining protein MreB (351 aa).

Residues 20-22, 169-171, 217-220, and 299-302 each bind ATP; these read TAN, GGT, ERIK, and GGAL.

It belongs to the FtsA/MreB family. As to quaternary structure, forms polymers.

The protein resides in the cytoplasm. Functionally, forms membrane-associated dynamic filaments that are essential for cell shape determination. Acts by regulating cell wall synthesis and cell elongation, and thus cell shape. A feedback loop between cell geometry and MreB localization may maintain elongated cell shape by targeting cell wall growth to regions of negative cell wall curvature. The sequence is that of Cell shape-determining protein MreB from Pasteurella multocida (strain Pm70).